We begin with the raw amino-acid sequence, 365 residues long: Undecaprenyl-phosphate alpha-N-acetylglucosaminyl 1-phosphate transferase (365 aa).

Transmembrane regions (helical) follow at residues Leu-3 to Val-23, Gly-45 to Ile-65, Ile-99 to Leu-119, Val-132 to Phe-152, Gly-157 to Leu-177, Leu-187 to Leu-207, Val-213 to Gln-233, Ile-242 to Met-262, Gln-293 to Glu-313, and Leu-315 to Gly-335.

Belongs to the glycosyltransferase 4 family. WecA subfamily. Requires Mg(2+) as cofactor. It depends on Mn(2+) as a cofactor.

The protein localises to the cell inner membrane. The catalysed reaction is di-trans,octa-cis-undecaprenyl phosphate + UDP-N-acetyl-alpha-D-glucosamine = N-acetyl-alpha-D-glucosaminyl-di-trans,octa-cis-undecaprenyl diphosphate + UMP. The protein operates within bacterial outer membrane biogenesis; LPS O-antigen biosynthesis. It participates in bacterial outer membrane biogenesis; enterobacterial common antigen biosynthesis. In terms of biological role, catalyzes the transfer of the GlcNAc-1-phosphate moiety from UDP-GlcNAc onto the carrier lipid undecaprenyl phosphate (C55-P), yielding GlcNAc-pyrophosphoryl-undecaprenyl (GlcNAc-PP-C55). This chain is Undecaprenyl-phosphate alpha-N-acetylglucosaminyl 1-phosphate transferase, found in Yersinia pestis.